Reading from the N-terminus, the 126-residue chain is MAILGLGTDIVEIARIEAVIARSGDRLARRVLSDHEWSIWEQHQQPVRFLAKRFAVKEAAAKALGTGIRNGLAFNQFEVYNDELGKPKLRLWGEANLLAERMGVSAIHVTLADERHYACATVIVES.

Residues Asp-9 and Glu-58 each coordinate Mg(2+).

Belongs to the P-Pant transferase superfamily. AcpS family. It depends on Mg(2+) as a cofactor.

The protein localises to the cytoplasm. It carries out the reaction apo-[ACP] + CoA = holo-[ACP] + adenosine 3',5'-bisphosphate + H(+). Transfers the 4'-phosphopantetheine moiety from coenzyme A to a Ser of acyl-carrier-protein. This is Holo-[acyl-carrier-protein] synthase from Klebsiella pneumoniae subsp. pneumoniae (strain ATCC 700721 / MGH 78578).